The following is a 212-amino-acid chain: Large ribosomal subunit protein uL3 (212 aa).

The segment at 127-153 is disordered; it reads FRGGPATHGQSDRHRAPGSIGSGTTPG.

It belongs to the universal ribosomal protein uL3 family. In terms of assembly, part of the 50S ribosomal subunit. Forms a cluster with proteins L14 and L19.

Functionally, one of the primary rRNA binding proteins, it binds directly near the 3'-end of the 23S rRNA, where it nucleates assembly of the 50S subunit. This Herpetosiphon aurantiacus (strain ATCC 23779 / DSM 785 / 114-95) protein is Large ribosomal subunit protein uL3.